The chain runs to 408 residues: Energy-coupling factor transporter ATP-binding protein EcfA1 (408 aa).

An ABC transporter domain is found at 140-374 (IEIKNLSFKY…KEFLRNIQLD (235 aa)). 174-181 (GHNGSGKS) lines the ATP pocket.

Belongs to the ABC transporter superfamily. Energy-coupling factor EcfA family. Forms a stable energy-coupling factor (ECF) transporter complex composed of 2 membrane-embedded substrate-binding proteins (S component), 2 ATP-binding proteins (A component) and 2 transmembrane proteins (T component).

It is found in the cell membrane. Functionally, ATP-binding (A) component of a common energy-coupling factor (ECF) ABC-transporter complex. Unlike classic ABC transporters this ECF transporter provides the energy necessary to transport a number of different substrates. The protein is Energy-coupling factor transporter ATP-binding protein EcfA1 of Mycoplasma capricolum subsp. capricolum (strain California kid / ATCC 27343 / NCTC 10154).